We begin with the raw amino-acid sequence, 200 residues long: Dephospho-CoA kinase (200 aa).

Positions 2 to 200 (LIAVVGKAGV…CHHGHYQTPK (199 aa)) constitute a DPCK domain. An ATP-binding site is contributed by 10–15 (GVGKTT).

It belongs to the CoaE family.

It localises to the cytoplasm. It catalyses the reaction 3'-dephospho-CoA + ATP = ADP + CoA + H(+). The protein operates within cofactor biosynthesis; coenzyme A biosynthesis; CoA from (R)-pantothenate: step 5/5. In terms of biological role, catalyzes the phosphorylation of the 3'-hydroxyl group of dephosphocoenzyme A to form coenzyme A. This Mycoplasma pneumoniae (strain ATCC 29342 / M129 / Subtype 1) (Mycoplasmoides pneumoniae) protein is Dephospho-CoA kinase.